Consider the following 103-residue polypeptide: Thioredoxin (103 aa).

A Thioredoxin domain is found at 1-103 (MVKEITDATF…ELDEVINKYV (103 aa)). An intrachain disulfide couples Cys28 to Cys31.

The protein belongs to the thioredoxin family.

Functionally, component of the thioredoxin-thioredoxin reductase system. Participates in various redox reactions through the reversible oxidation of its active center dithiol to a disulfide and catalyzes dithiol-disulfide exchange reactions. The sequence is that of Thioredoxin (trxA) from Listeria innocua serovar 6a (strain ATCC BAA-680 / CLIP 11262).